We begin with the raw amino-acid sequence, 81 residues long: Large ribosomal subunit protein uL23 (81 aa).

The protein belongs to the universal ribosomal protein uL23 family. As to quaternary structure, part of the 50S ribosomal subunit. Contacts protein L29.

In terms of biological role, binds to 23S rRNA. One of the proteins that surrounds the polypeptide exit tunnel on the outside of the ribosome. In Saccharolobus solfataricus (strain ATCC 35092 / DSM 1617 / JCM 11322 / P2) (Sulfolobus solfataricus), this protein is Large ribosomal subunit protein uL23.